The following is a 157-amino-acid chain: Pyruvoyl-dependent arginine decarboxylase 1 (157 aa).

Ser41 bears the Pyruvic acid (Ser) mark.

Belongs to the PdaD family. Pyruvate serves as cofactor.

It carries out the reaction L-arginine + H(+) = agmatine + CO2. This Archaeoglobus fulgidus (strain ATCC 49558 / DSM 4304 / JCM 9628 / NBRC 100126 / VC-16) protein is Pyruvoyl-dependent arginine decarboxylase 1 (pdaD1).